The following is a 324-amino-acid chain: Polycomb complex protein BMI-1-B (324 aa).

The segment at 18–57 (CVLCGGYFIDATTIVECLHSFCKMCIVRYLETSKYCPICD) adopts an RING-type zinc-finger fold. The short motif at 81–95 (KLVPGLFKNEMKRRR) is the Nuclear localization signal element. Positions 232-324 (IKLSSPRNDM…TSHNGSNSLG (93 aa)) are disordered. Residues 256–279 (DKPNSPSIVAAPSTSSSMPSPNTP) are compositionally biased toward low complexity. Polar residues-rich tracts occupy residues 280-295 (VQST…TING) and 303-324 (NGQT…NSLG).

Component of a PRC1-like complex. Homodimer. Interacts with cbx2.

The protein resides in the nucleus. In terms of biological role, component of a Polycomb group (PcG) multiprotein PRC1-like complex, a complex class required to maintain the transcriptionally repressive state of many genes, including Hox genes, throughout development. PcG PRC1 complex acts via chromatin remodeling and modification of histones; it mediates monoubiquitination of histone H2A 'Lys-119', rendering chromatin heritably changed in its expressibility. In the PRC1 complex, it is required to stimulate the E3 ubiquitin-protein ligase activity of rnf2. The polypeptide is Polycomb complex protein BMI-1-B (bmi1b) (Danio rerio (Zebrafish)).